A 567-amino-acid chain; its full sequence is Eukaryotic translation initiation factor 3 subunit D (567 aa).

Disordered regions lie at residues 12 to 34 (PVKS…YAPF) and 122 to 160 (GQNV…RGRR). Gly residues predominate over residues 128 to 142 (GGRGGRYGSSGGRGA). An RNA gate region spans residues 300 to 314 (PFDYLTVNENAYDSP).

The protein belongs to the eIF-3 subunit D family. As to quaternary structure, component of the eukaryotic translation initiation factor 3 (eIF-3) complex. The eIF-3 complex appears to include tif32/eif3a, SPAC25G10.08/eif3b, tif33/eif3c, SPBC4C3.07/eif3f, tif35/eif3g and sum1/eif3i. This set of common subunits may also associate exclusively with either moe1/eif3d and int6/eif3e, or with SPAC821.05/eif3h and SPAC1751.03/eif3m. The eIF-3 complex may also include SPAC3A12.13c/eif3j.

Its subcellular location is the cytoplasm. Functionally, mRNA cap-binding component of the eukaryotic translation initiation factor 3 (eIF-3) complex, which is involved in protein synthesis of a specialized repertoire of mRNAs and, together with other initiation factors, stimulates binding of mRNA and methionyl-tRNAi to the 40S ribosome. The eIF-3 complex specifically targets and initiates translation of a subset of mRNAs involved in cell proliferation. In the eIF-3 complex, eif3d specifically recognizes and binds the 7-methylguanosine cap of a subset of mRNAs. The polypeptide is Eukaryotic translation initiation factor 3 subunit D (moe1) (Schizosaccharomyces pombe (strain 972 / ATCC 24843) (Fission yeast)).